Reading from the N-terminus, the 416-residue chain is Cytochrome P450 monooxygenase PikC (416 aa).

Residues glutamate 94, 187 to 191, and 238 to 246 each bind substrate; these read AQTAM and HILLVAGHE. Heme is bound at residue cysteine 354.

This sequence belongs to the cytochrome P450 family. It depends on heme as a cofactor.

It catalyses the reaction narbomycin + 2 reduced [2Fe-2S]-[ferredoxin] + O2 + 2 H(+) = pikromycin + 2 oxidized [2Fe-2S]-[ferredoxin] + H2O. The enzyme catalyses narbomycin + 2 reduced [2Fe-2S]-[ferredoxin] + O2 + 2 H(+) = neopikromycin + 2 oxidized [2Fe-2S]-[ferredoxin] + H2O. It carries out the reaction narbomycin + 4 reduced [2Fe-2S]-[ferredoxin] + 2 O2 + 4 H(+) = novapikromycin + 4 oxidized [2Fe-2S]-[ferredoxin] + 2 H2O. The catalysed reaction is 10-deoxymethymycin + 2 reduced [2Fe-2S]-[ferredoxin] + O2 + 2 H(+) = methymycin + 2 oxidized [2Fe-2S]-[ferredoxin] + H2O. It catalyses the reaction 10-deoxymethymycin + 2 reduced [2Fe-2S]-[ferredoxin] + O2 + 2 H(+) = neomethymycin + 2 oxidized [2Fe-2S]-[ferredoxin] + H2O. The enzyme catalyses 10-deoxymethymycin + 4 reduced [2Fe-2S]-[ferredoxin] + 2 O2 + 4 H(+) = novamethymycin + 4 oxidized [2Fe-2S]-[ferredoxin] + 2 H2O. It functions in the pathway antibiotic biosynthesis. Functionally, catalyzes the hydroxylation of narbomycin to give rise to pikromycin, and of 10-deoxymethymycin (YC-17) to give rise to methymycin and neomethymycin during macrolide antibiotic biosynthesis. In addition, produces low amounts of neopicromycin, novapikromycin and novamethymycin. Requires the participation of a ferredoxin and a ferredoxin reductase for the transfer of electrons from NADPH to the monooxygenase. The chain is Cytochrome P450 monooxygenase PikC from Streptomyces venezuelae.